Here is a 235-residue protein sequence, read N- to C-terminus: 5'-methylthioadenosine/S-adenosylhomocysteine nucleosidase (235 aa).

The active-site Proton acceptor is the Glu12. Substrate is bound by residues Gly78, Ile152, and 173-174; that span reads ME. The Proton donor role is filled by Asp197.

This sequence belongs to the PNP/UDP phosphorylase family. MtnN subfamily. In terms of assembly, homodimer.

It carries out the reaction S-adenosyl-L-homocysteine + H2O = S-(5-deoxy-D-ribos-5-yl)-L-homocysteine + adenine. It catalyses the reaction S-methyl-5'-thioadenosine + H2O = 5-(methylsulfanyl)-D-ribose + adenine. The catalysed reaction is 5'-deoxyadenosine + H2O = 5-deoxy-D-ribose + adenine. It functions in the pathway amino-acid biosynthesis; L-methionine biosynthesis via salvage pathway; S-methyl-5-thio-alpha-D-ribose 1-phosphate from S-methyl-5'-thioadenosine (hydrolase route): step 1/2. Catalyzes the irreversible cleavage of the glycosidic bond in both 5'-methylthioadenosine (MTA) and S-adenosylhomocysteine (SAH/AdoHcy) to adenine and the corresponding thioribose, 5'-methylthioribose and S-ribosylhomocysteine, respectively. Also cleaves 5'-deoxyadenosine, a toxic by-product of radical S-adenosylmethionine (SAM) enzymes, into 5-deoxyribose and adenine. Thus, is required for in vivo function of the radical SAM enzymes biotin synthase and lipoic acid synthase, that are inhibited by 5'-deoxyadenosine accumulation. This chain is 5'-methylthioadenosine/S-adenosylhomocysteine nucleosidase, found in Proteus mirabilis (strain HI4320).